The primary structure comprises 534 residues: Probable alanine aminotransferase, mitochondrial (534 aa).

The transit peptide at 1 to 18 (MFKRSLKVLLSNPPINRV) directs the protein to the mitochondrion. K352 is modified (N6-(pyridoxal phosphate)lysine).

Belongs to the class-I pyridoxal-phosphate-dependent aminotransferase family. Alanine aminotransferase subfamily. As to quaternary structure, homodimer. The cofactor is pyridoxal 5'-phosphate.

The protein resides in the mitochondrion matrix. It carries out the reaction L-alanine + 2-oxoglutarate = pyruvate + L-glutamate. The protein operates within amino-acid degradation; L-alanine degradation via transaminase pathway; pyruvate from L-alanine: step 1/1. In Dictyostelium discoideum (Social amoeba), this protein is Probable alanine aminotransferase, mitochondrial (gpt).